Here is a 528-residue protein sequence, read N- to C-terminus: Drimenol cyclase drtB (528 aa).

The protein belongs to the HAD-like hydrolase superfamily.

The enzyme catalyses (2E,6E)-farnesyl diphosphate + H2O = (5S,9S,10S)-drim-7-en-11-ol + diphosphate. Its pathway is secondary metabolite biosynthesis; terpenoid biosynthesis. In terms of biological role, drimenol cyclase; part of the gene cluster that mediates the biosynthesis of various drimane-type sesquiterpene esters, compounds that exhibit diverse biological activities and are widely present in eukaryotes. The pathway begins with the synthesis of the backbone drimenol by the terpene cyclase drtB using farnesyl pyrophosphate (FPP) as substrate. The cytochrome P450 monooxygenase drtD is then responsible for the hydroxylations at C-6, C-9 and C-12, as well as the oxidation of hydroxyl groups at C-6 and C-11 to a ketone and an aldehyde, respectively. Then, the biosynthesis can go in two directions, either the hydroxylated drimenol is further hydroxylated at C-2 and C-3 by an enzyme(s) not associated with the drt cluster, or the FAD-binding oxidoreductase drtC further oxidizes C-11 or C-12 to form the butyrolactone ring. DrtB, drtD and drtC are solely responsible for the formation of the different drimane structures observed during drimane sesquiterpenes biosynthesis. The polyketide synthase drtA synthesizes different lengths (C6 and C8) of PKS chains, which are then oxidized to varying degrees by the short-chain dehydrogenase drtF. Finally, these PKS chains are transferred onto drimane sesquiterpenes by the acyltransferase drtE, forming the sesquiterpene esters. In addition to the different fatty acyl-CoA chains produced by drtA, drtE is also able to use cinnamoyl-CoA as a substrate. The protein is Drimenol cyclase drtB of Aspergillus calidoustus.